The following is a 434-amino-acid chain: Polyadenylate-binding protein RBP47C' (434 aa).

Residues 1-50 (MADVKVQSESESSDSHPLVDYQSLPPYPPPHPPVEVEENQPKTSPTPPPP) are disordered. RRM domains are found at residues 103–185 (KTIW…WASF), 199–278 (LSIF…PATP), and 306–378 (TTIF…WGRN).

Belongs to the polyadenylate-binding RBP47 family. In terms of assembly, interacts with the poly(A) tail of mRNA in nucleus.

It is found in the nucleus. Its subcellular location is the cytoplasmic granule. In terms of biological role, heterogeneous nuclear ribonucleoprotein (hnRNP)-protein binding the poly(A) tail of mRNA and probably involved in some steps of pre-mRNA maturation. The chain is Polyadenylate-binding protein RBP47C' (RBP47C') from Arabidopsis thaliana (Mouse-ear cress).